We begin with the raw amino-acid sequence, 114 residues long: Large ribosomal subunit protein bL19 (114 aa).

The protein belongs to the bacterial ribosomal protein bL19 family.

In terms of biological role, this protein is located at the 30S-50S ribosomal subunit interface and may play a role in the structure and function of the aminoacyl-tRNA binding site. The polypeptide is Large ribosomal subunit protein bL19 (Heliobacterium modesticaldum (strain ATCC 51547 / Ice1)).